The following is a 312-amino-acid chain: Urease accessory protein UreD (312 aa).

It belongs to the UreD family. As to quaternary structure, ureD, UreF and UreG form a complex that acts as a GTP-hydrolysis-dependent molecular chaperone, activating the urease apoprotein by helping to assemble the nickel containing metallocenter of UreC. The UreE protein probably delivers the nickel.

The protein localises to the cytoplasm. In terms of biological role, required for maturation of urease via the functional incorporation of the urease nickel metallocenter. This is Urease accessory protein UreD from Marinomonas sp. (strain MWYL1).